Reading from the N-terminus, the 374-residue chain is MTKQTVLYDQHVAEGARMVDFHGWMMPLHYGSQLEEHHAVRSDAGMFDVSHMTIVDLHGVRVRDFLRHLLANDVARLTQPGKALYSAMLNASGGVIDDLIVYFMADHHFRLVVNSATRERDLAWIGEHAPAFGVEICERRDLALIAVQGPTARQRVDALLTPAQRQMVAGMKPFFGRQVGSLFIATTGYTGEDGYEIALPQDEAVAFWQQLVQAGIRPCGLAARDTLRLEAGMNLYGQEMDEQISPLAANMGWTIAWAPPERDFIGRAALERQQSQHPEQLVGLVMREKGVLRAGMTIRCRDGQGDPCLGTITSGSFSPTLGCSIALARVPQGIGGEAWVEIRGRELALSVVKPGFVRHGHSLIPPADATAVGN.

It belongs to the GcvT family. In terms of assembly, the glycine cleavage system is composed of four proteins: P, T, L and H.

It catalyses the reaction N(6)-[(R)-S(8)-aminomethyldihydrolipoyl]-L-lysyl-[protein] + (6S)-5,6,7,8-tetrahydrofolate = N(6)-[(R)-dihydrolipoyl]-L-lysyl-[protein] + (6R)-5,10-methylene-5,6,7,8-tetrahydrofolate + NH4(+). Its function is as follows. The glycine cleavage system catalyzes the degradation of glycine. The sequence is that of Aminomethyltransferase from Edwardsiella ictaluri (strain 93-146).